Consider the following 417-residue polypeptide: Histidine--tRNA ligase (417 aa).

It belongs to the class-II aminoacyl-tRNA synthetase family. As to quaternary structure, homodimer.

The protein localises to the cytoplasm. It carries out the reaction tRNA(His) + L-histidine + ATP = L-histidyl-tRNA(His) + AMP + diphosphate + H(+). The protein is Histidine--tRNA ligase of Acetivibrio thermocellus (strain ATCC 27405 / DSM 1237 / JCM 9322 / NBRC 103400 / NCIMB 10682 / NRRL B-4536 / VPI 7372) (Clostridium thermocellum).